Reading from the N-terminus, the 551-residue chain is Hydroxymethylpyrimidine/phosphomethylpyrimidine kinase THI21 (551 aa).

Glutamine 64 is a 4-amino-5-hydroxymethyl-2-methylpyrimidine binding site.

It in the N-terminal section; belongs to the ThiD family. This sequence in the C-terminal section; belongs to the thiaminase-2 family.

The enzyme catalyses 4-amino-5-hydroxymethyl-2-methylpyrimidine + ATP = 4-amino-2-methyl-5-(phosphooxymethyl)pyrimidine + ADP + H(+). It carries out the reaction 4-amino-2-methyl-5-(phosphooxymethyl)pyrimidine + ATP = 4-amino-2-methyl-5-(diphosphooxymethyl)pyrimidine + ADP. It participates in cofactor biosynthesis; thiamine diphosphate biosynthesis; 4-amino-2-methyl-5-diphosphomethylpyrimidine from 5-amino-1-(5-phospho-D-ribosyl)imidazole: step 2/3. It functions in the pathway cofactor biosynthesis; thiamine diphosphate biosynthesis; 4-amino-2-methyl-5-diphosphomethylpyrimidine from 5-amino-1-(5-phospho-D-ribosyl)imidazole: step 3/3. In terms of biological role, catalyzes the phosphorylation of hydroxymethylpyrimidine phosphate (HMP-P) to HMP-PP, and also probably that of HMP to HMP-P. The chain is Hydroxymethylpyrimidine/phosphomethylpyrimidine kinase THI21 (THI21) from Saccharomyces cerevisiae (strain ATCC 204508 / S288c) (Baker's yeast).